The following is a 495-amino-acid chain: Keratin, type II cytoskeletal 74 (495 aa).

The segment at 1 to 105 is head; sequence MASCHTAGHR…DPEIQKVRAQ (105 aa). The segment at 106-141 is coil 1A; it reads EREQIKALNDKFASFIDKVRFLEQQNQVLQTKWELL. The IF rod domain occupies 106-419; that stretch reads EREQIKALND…KLLEGEENRM (314 aa). The segment at 142-160 is linker 1; that stretch reads QQLDLSNCRRNLEPVYEAH. Positions 161 to 252 are coil 1B; the sequence is ISNLRKQLEM…CLYDEEISQL (92 aa). The segment at 253–276 is linker 12; that stretch reads QTHASETSVILSMDNNRDLDLAGI. The coil 2 stretch occupies residues 277–415; that stretch reads IAEVRAHYED…ATYRKLLEGE (139 aa). The tract at residues 416-495 is tail; it reads ENRMSGENPS…AAGTLARKTT (80 aa). The tract at residues 449-495 is disordered; that stretch reads DSEAGNAVGSPSTPRNSQSKTRGSSVDPRDAQDESAAAAGTLARKTT. Residues 457 to 472 are compositionally biased toward polar residues; that stretch reads GSPSTPRNSQSKTRGS.

The protein belongs to the intermediate filament family. In terms of assembly, heterotetramer of two type I and two type II keratins. In terms of tissue distribution, expressed in epidermis with a particularly strong staining in the nail matrix, nail bed and hyponychium (at protein level).

Has a role in hair formation. Specific component of keratin intermediate filaments in the inner root sheath (IRS) of the hair follicle. The sequence is that of Keratin, type II cytoskeletal 74 from Mus musculus (Mouse).